A 296-amino-acid polypeptide reads, in one-letter code: Bidirectional sugar transporter SWEET13 (296 aa).

The Extracellular portion of the chain corresponds to 1-9; the sequence is MAGLSLQHP. The chain crosses the membrane as a helical span at residues 10–30; it reads WAFAFGLLGNLISFTTYLAPI. The MtN3/slv 1 domain occupies 13–98; it reads AFGLLGNLIS…VMYLAYAPKK (86 aa). Topologically, residues 31 to 45 are cytoplasmic; sequence PTFYRIYKSKSTEGF. Residues 46–66 traverse the membrane as a helical segment; that stretch reads QSVPYVVALFSAMLWIFYALI. Over 67–71 the chain is Extracellular; that stretch reads KSNEA. A helical transmembrane segment spans residues 72 to 92; that stretch reads LLITINAAGCVIETIYIVMYL. The Cytoplasmic segment spans residues 93–105; sequence AYAPKKAKVFTTK. The helical transmembrane segment at 106–126 threads the bilayer; that stretch reads ILLLLNVGVFGVILLLTLLLS. Residues 127 to 133 lie on the Extracellular side of the membrane; it reads HGEQRVV. A helical transmembrane segment spans residues 134-154; the sequence is SLGWVCVAFSVSVFVAPLSII. Residues 134–217 enclose the MtN3/slv 2 domain; the sequence is SLGWVCVAFS…MGLYVFYMNA (84 aa). The Cytoplasmic segment spans residues 155–167; that stretch reads KRVIQSRSVEYMP. A helical membrane pass occupies residues 168-188; it reads FSLSLTLTLSAVVWFLYGLLI. The Extracellular segment spans residues 189 to 192; that stretch reads KDKY. Residues 193–213 traverse the membrane as a helical segment; sequence VALPNILGFTFGVVQMGLYVF. Residues 214–296 lie on the Cytoplasmic side of the membrane; that stretch reads YMNATPVAGE…PPRAVEVAAV (83 aa).

Belongs to the SWEET sugar transporter family. As to quaternary structure, forms homooligomers and/or heterooligomers.

It localises to the cell membrane. Mediates both low-affinity uptake and efflux of sugar across the plasma membrane. Its function is as follows. Confers blight susceptibility. Confers TAL effector-mediated susceptibility to Xanthomonas oryzae pv. oryzae. The sequence is that of Bidirectional sugar transporter SWEET13 (SWEET13) from Oryza sativa subsp. japonica (Rice).